We begin with the raw amino-acid sequence, 1692 residues long: Tyrosine-protein phosphatase non-receptor type 23 (1692 aa).

Residues 8 to 394 enclose the BRO1 domain; sequence PMIWLDLKEA…AKIEDKNEVL (387 aa). TPR repeat units follow at residues 250–283 and 374–407; these read AVAHLHMGKQAEEQQKFGERVAYFQSALDKLNEA and EEKAKLLREMLAKIEDKNEVLDQFMDSMQLDPET. Positions 552–639 form a coiled coil; that stretch reads KAVLQNLKRI…RALTEANVQY (88 aa). Disordered regions lie at residues 711–788, 884–923, and 944–1199; these read DREL…PATH, DSVQAPISSHTAPRPNPTPALPQPCFPVPQPVPQSVPQPQ, and TYSI…LLQP. Position 744 is a phosphothreonine (Thr-744). A his region spans residues 773–1186; sequence HFSPGPFPSS…SSSPESQHGG (414 aa). Residues 774-785 show a composition bias toward low complexity; that stretch reads FSPGPFPSSTGP. Residues 884–894 show a composition bias toward polar residues; the sequence is DSVQAPISSHT. Residues 897 to 923 are compositionally biased toward pro residues; that stretch reads RPNPTPALPQPCFPVPQPVPQSVPQPQ. Arg-974 carries the omega-N-methylarginine modification. 21 consecutive repeat copies span residues 977-978, 979-980, 981-982, 983-984, 985-986, 987-988, 989-990, 991-992, 993-994, 995-996, 997-998, 999-1000, 1001-1002, 1003-1004, 1005-1006, 1007-1008, 1009-1010, 1011-1012, 1013-1014, 1015-1016, and 1017-1018. Positions 977–1018 are 21 X 2 AA approximate tandem repeats of P-Q; that stretch reads PQAQAQPQPQPQPQPQPQPQPQPQPQPQSQSQPQPQPQPQPQ. Positions 984–1002 are enriched in pro residues; it reads QPQPQPQPQPQPQPQPQPQ. 2 stretches are compositionally biased toward pro residues: residues 1093-1102 and 1127-1165; these read FPSPGPPHPH and GPPPASQPTPSPHLVPSPAPSPGPGPVPSRPPTAEPPPC. Ser-1178 and Ser-1179 each carry phosphoserine. At Thr-1187 the chain carries Phosphothreonine. The Tyrosine-protein phosphatase domain occupies 1248–1508; the sequence is DAIWRELQEA…KFCHEALVRH (261 aa). Cys-1448 functions as the Phosphocysteine intermediate in the catalytic mechanism. The segment at 1574-1638 is disordered; it reads ASLPGLVEPP…PSSSLELLAS (65 aa). The span at 1598-1612 shows a compositional bias: pro residues; the sequence is SSSPPPLSSPLPEAP. The span at 1620–1638 shows a compositional bias: low complexity; it reads VPEAPSLGPPSSSLELLAS. Residue Arg-1671 is modified to Omega-N-methylarginine.

It belongs to the protein-tyrosine phosphatase family. Non-receptor class subfamily. As to quaternary structure, interacts with GRAP2 and GRB2. Interacts with UBAP1 and CHMP4B.

The protein localises to the nucleus. It is found in the cytoplasm. It localises to the cytoplasmic vesicle. Its subcellular location is the endosome. The protein resides in the cytoskeleton. The protein localises to the cilium basal body. The enzyme catalyses O-phospho-L-tyrosyl-[protein] + H2O = L-tyrosyl-[protein] + phosphate. Plays a role in sorting of endocytic ubiquitinated cargos into multivesicular bodies (MVBs) via its interaction with the ESCRT-I complex (endosomal sorting complex required for transport I), and possibly also other ESCRT complexes. May act as a negative regulator of Ras-mediated mitogenic activity. Plays a role in ciliogenesis. This chain is Tyrosine-protein phosphatase non-receptor type 23 (Ptpn23), found in Mus musculus (Mouse).